The primary structure comprises 114 residues: Large ribosomal subunit protein uL18 (114 aa).

It belongs to the universal ribosomal protein uL18 family. As to quaternary structure, part of the 50S ribosomal subunit; part of the 5S rRNA/L5/L18/L25 subcomplex. Contacts the 5S and 23S rRNAs.

Its function is as follows. This is one of the proteins that bind and probably mediate the attachment of the 5S RNA into the large ribosomal subunit, where it forms part of the central protuberance. The protein is Large ribosomal subunit protein uL18 of Porphyromonas gingivalis (strain ATCC 33277 / DSM 20709 / CIP 103683 / JCM 12257 / NCTC 11834 / 2561).